The chain runs to 828 residues: Transcription factor SOX-6 (828 aa).

The tract at residues Met1–Pro51 is disordered. Positions Thr25–Asp34 are enriched in basic and acidic residues. Position 119 is a phosphothreonine (Thr119). A coiled-coil region spans residues Leu184–Gly262. Positions Ser380–Gly470 are disordered. Residues Asn393–Gly402 show a composition bias toward polar residues. A Phosphoserine modification is found at Ser399. A Phosphothreonine modification is found at Thr401. Residues Lys404 and Lys417 each participate in a glycyl lysine isopeptide (Lys-Gly) (interchain with G-Cter in SUMO) cross-link. Ser439 and Ser442 each carry phosphoserine. The span at Ser439 to Lys461 shows a compositional bias: polar residues. Residues Ile621–Lys689 constitute a DNA-binding region (HMG box). Over residues Thr753–Gly781 the composition is skewed to polar residues. Residues Thr753 to Asn828 form a disordered region. Residues Asn796–Asp809 show a composition bias toward acidic residues.

In terms of assembly, homodimer. Interacts with DAZAP2. May interact with CENPK. In terms of processing, sumoylation inhibits the transcriptional activity. In terms of tissue distribution, expressed in a wide variety of tissues, most abundantly in skeletal musclen.

The protein localises to the nucleus. Its subcellular location is the cytoplasm. Its function is as follows. Transcription factor that plays a key role in several developmental processes, including neurogenesis, chondrocytes differentiation and cartilage formation. Specifically binds the 5'-AACAAT-3' DNA motif present in enhancers and super-enhancers and promotes expression of genes important for chondrogenesis. Required for overt chondrogenesis when condensed prechondrocytes differentiate into early stage chondrocytes: SOX5 and SOX6 cooperatively bind with SOX9 on active enhancers and super-enhancers associated with cartilage-specific genes, and thereby potentiate SOX9's ability to transactivate. Not involved in precartilaginous condensation, the first step in chondrogenesis, during which skeletal progenitors differentiate into prechondrocytes. Together with SOX5, required to form and maintain a pool of highly proliferating chondroblasts between epiphyses and metaphyses, to form columnar chondroblasts, delay chondrocyte prehypertrophy but promote hypertrophy, and to delay terminal differentiation of chondrocytes on contact with ossification fronts. Binds to the proximal promoter region of the myelin protein MPZ gene, and is thereby involved in the differentiation of oligodendroglia in the developing spinal tube. Binds to the gene promoter of MBP and acts as a transcriptional repressor. The protein is Transcription factor SOX-6 of Homo sapiens (Human).